A 401-amino-acid chain; its full sequence is MKKVVLAYSGGLDTSIIIPWLKENYGYEVIAMAADLGQGEELEPLHEKAIKSGASKLYIEDLQEEFVTDFIYPTLKAGAVYEGKYLLGTSFARPLIAQRLVEIAAKEGAVAIAHGATGKGNDQVRFELAVKALNPDLEIIAPWRIWDIKSREDAIDYAVERGIPVPVTKDRPYSMDRNVWHLSHEGGDLEDPWNEPKKDLYLLGVSPEDAPDEAEYLELDFEQGIPVSLNGEKLGPVQLLETLNEVGGKHGIGIVDMVENRLVGMKSRGVYETPGGTILYTAHQALEHLTLDRLTLHYKEQIALKYAELVYDGVWHSPLREALDAFVDVTQKNVTGTVRLKLYKGNCSLAGVKSPYSLYSEEFATFGRDGVYNQKDAEGFINLFGLPLKVRALMEKKSGLR.

Residues 7–15 (AYSGGLDTS) and Ala34 contribute to the ATP site. Residues Tyr85 and Ser90 each coordinate L-citrulline. Gly115 is a binding site for ATP. Residues Thr117, Asn121, and Asp122 each coordinate L-aspartate. Position 121 (Asn121) interacts with L-citrulline. Arg125, Ser174, Ser183, Glu259, and Tyr271 together coordinate L-citrulline.

This sequence belongs to the argininosuccinate synthase family. Type 1 subfamily. In terms of assembly, homotetramer.

Its subcellular location is the cytoplasm. The enzyme catalyses L-citrulline + L-aspartate + ATP = 2-(N(omega)-L-arginino)succinate + AMP + diphosphate + H(+). It functions in the pathway amino-acid biosynthesis; L-arginine biosynthesis; L-arginine from L-ornithine and carbamoyl phosphate: step 2/3. This is Argininosuccinate synthase from Desulfitobacterium hafniense (strain DSM 10664 / DCB-2).